A 336-amino-acid chain; its full sequence is Aldo-keto reductase str7 (336 aa).

NADP(+) is bound at residue Asp-57. The Proton donor role is filled by Tyr-62. His-124 contacts substrate. NADP(+)-binding positions include 154–155 (SE), Gln-174, 206–220 (SPLG…YKSP), and 283–291 (KKIKYLEEN).

This sequence belongs to the aldo/keto reductase family. Aldo/keto reductase 2 subfamily.

It functions in the pathway mycotoxin biosynthesis. Aldo-keto reductase; part of the gene cluster that mediates the biosynthesis of strobilurin A, an antifungal polyketide that contains a key beta-methoxyacrylate toxophore that targets the complex III of the mitochondrial electron transport chain. Strobilurin biosynthesis begins with construction of benzoyl CoA by step-wise elimination of ammonia from phenylalanine by the phenylalanine ammonia-lyase str11, oxygenation by str8 and retro-Claisen reaction to form benzoic acid, which is activated to its CoA thiolester benzoyl CoA by the dedicated CoA ligase str10. Benzoyl CoA forms the starter unit for the highly reducing polyketide synthase stpks1 that produces the polyketide prestrobilutin A. The FAD-dependent oxygenase str9 then catalyzes the key oxidative rearrangement responsible for the creation of the beta-methoxyacrylate toxophore. Str9 performs epoxidation of the 2,3 olefin of prestrobilutin A, followed by Meinwald rearrangement to furnish the aldehyde intermediate. Rapid enolization of the aldehyde intermediate would give the beta-methoxyacrylate skeleton and methylations catalyzed by str2 and str3 complete the synthesis and lead to the production of strobilurin A. The short-chain dehydrogenase stl2 and the dehydrogenase str4 play a role in the shunt pathway leading to the production of bolineol. The cluster encodes no obvious halogenase gene that could be involved in production of strobilurin B, nor any obvious dimethylallyl-transferase that could be involved in the production of strobilurin G. It is possible that unknown proteins encoded in, or near, the cluster (such as str1 or stl1) may form new classes of halogenases or dimethylally-transferases, or that the responsible genes are located elsewhere on the genome. Similarly, proteins encoded by str5/str6 hydrolases appear to have no chemical role in the biosynthesis of strobilurin A. Finally, no obvious self-resistance gene is found within the cluster. The chain is Aldo-keto reductase str7 from Strobilurus tenacellus.